Here is a 750-residue protein sequence, read N- to C-terminus: Cullin-5 (750 aa).

The 62-residue stretch at 678-739 (RFFKLQAAIV…QEYIRRTTDD (62 aa)) folds into the Cullin neddylation domain. K691 is covalently cross-linked (Glycyl lysine isopeptide (Lys-Gly) (interchain with G-Cter in NEDD8)).

Belongs to the cullin family. Neddylated; which enhances the ubiquitination activity of SCF-like complex.

It participates in protein modification; protein ubiquitination. Probable core component of cullin-based SCF-like E3 ubiquitin-protein ligase complexes which mediate the ubiquitination and subsequent proteasomal degradation of target proteins. The E3 ubiquitin-protein ligase activity of the complex is dependent on the neddylation of the cullin subunit. This is Cullin-5 (culE) from Dictyostelium discoideum (Social amoeba).